A 1834-amino-acid chain; its full sequence is Non-reducing polyketide synthase spyA (1834 aa).

The 165-residue stretch at 91-255 folds into the Starter acyltransferase (SAT) domain; the sequence is LAPLTVIIHL…TRIPIYGRYH (165 aa). The Ketosynthase family 3 (KS3) domain maps to 385 to 801; sequence EHSIAVIGAA…GNNTAVIVCE (417 aa). Residues Cys551, His687, and His724 each act as for beta-ketoacyl synthase activity in the active site. A Malonyl-CoA:ACP transacylase (MAT) domain is found at 919–1164; the sequence is YEGSSLLRSH…KELGPCTWVE (246 aa). Residues 1269 to 1398 are N-terminal hotdog fold; it reads PLVYLLRDEG…GVISLRQERH (130 aa). The 309-residue stretch at 1269 to 1577 folds into the PKS/mFAS DH domain; it reads PLVYLLRDEG…FVRITASSLN (309 aa). The product template (PT) domain stretch occupies residues 1269 to 1577; sequence PLVYLLRDEG…FVRITASSLN (309 aa). Positions 1428–1577 are C-terminal hotdog fold; the sequence is AISLKEGIIY…FVRITASSLN (150 aa). The 75-residue stretch at 1616-1690 folds into the Carrier 1 domain; the sequence is SDILSILSHL…TLCQEIQTQR (75 aa). At Ser1650 the chain carries O-(pantetheine 4'-phosphoryl)serine. The segment at 1693-1720 is disordered; the sequence is RLARASRTTTATRNTSFSLGRRTSSTES. A compositionally biased stretch (low complexity) spans 1697–1710; the sequence is ASRTTTATRNTSFS. The Carrier 2 domain maps to 1731-1807; that stretch reads SKSAAVLAQL…GLARLILASE (77 aa). The residue at position 1767 (Ser1767) is an O-(pantetheine 4'-phosphoryl)serine.

The cofactor is pantetheine 4'-phosphate.

The enzyme catalyses 2 malonyl-CoA + acetyl-CoA + 2 H(+) = triacetate lactone + 2 CO2 + 3 CoA. It participates in secondary metabolite biosynthesis; terpenoid biosynthesis. In terms of biological role, non-reducing polyketide synthase; part of the gene cluster that mediates the biosynthesis of meroterpenoids called sartorypyrones. The biosynthesis of sartorypyrones begins with the production of triacetic acid lactone (TAL) by the NR-PKS spyA using one molecule of acetyl-CoA and two molecules of malonyl-CoA. As spyA lacks a thioesterase (TE) domain, TAL is likely generated through self-release from spyA by spontaneous lactonization. After production of TAL, the prenyltransferase spyF then conjugates geranylgeranyl pyrophosphate (GGPP) to TAL to form geranylgeranyl-triacetate lactone, for which the pathway-specific geranylgeranyl pyrophosphate synthase (GGPS) spyE is required to provide GGPP. Subsequently, geranylgeranyl-triacetate lactone is epoxidized at the terminal olein by the FAD-dependent monooxygenase spyC, followed by cyclization of the terpenoid component catalyzed by the terpene cyclase spyD to produce both the bicyclic sartorypyrone F and the monocyclic sartorypyrone D. Finally, the last step of the biosynthesis involves the acetylation of the meroterpenoids sartorypyrones D and F by the acetyltransferase SpyB to produce sartorypyrones A and G, respectively. This Aspergillus fumigatus (strain ATCC MYA-4609 / CBS 101355 / FGSC A1100 / Af293) (Neosartorya fumigata) protein is Non-reducing polyketide synthase spyA.